The sequence spans 277 residues: 2,3,4,5-tetrahydropyridine-2,6-dicarboxylate N-succinyltransferase (277 aa).

The substrate site is built by arginine 106 and aspartate 143.

Belongs to the transferase hexapeptide repeat family. Homotrimer.

The protein resides in the cytoplasm. The enzyme catalyses (S)-2,3,4,5-tetrahydrodipicolinate + succinyl-CoA + H2O = (S)-2-succinylamino-6-oxoheptanedioate + CoA. It functions in the pathway amino-acid biosynthesis; L-lysine biosynthesis via DAP pathway; LL-2,6-diaminopimelate from (S)-tetrahydrodipicolinate (succinylase route): step 1/3. This is 2,3,4,5-tetrahydropyridine-2,6-dicarboxylate N-succinyltransferase from Xylella fastidiosa (strain 9a5c).